Reading from the N-terminus, the 87-residue chain is Large ribosomal subunit protein bL27 (87 aa).

Belongs to the bacterial ribosomal protein bL27 family.

In Paenarthrobacter aurescens (strain TC1), this protein is Large ribosomal subunit protein bL27.